Consider the following 491-residue polypeptide: Acetyl-coenzyme A carboxylase carboxyl transferase subunit beta (491 aa).

The 360-residue stretch at 132-491 (LWNQCENCFI…ISELLNLHAL (360 aa)) folds into the CoA carboxyltransferase N-terminal domain. Zn(2+) contacts are provided by cysteine 136, cysteine 139, cysteine 155, and cysteine 158. The C4-type zinc finger occupies 136 to 158 (CENCFIPNYKKVLKSNMQICEEC). The segment covering 252–262 (EKVEEWTKPDL) has biased composition (basic and acidic residues). Disordered regions lie at residues 252–273 (EKVEEWTKPDLDEGEESQDEER) and 279–298 (DKGEESQEIEDSEANDEDDD). The segment covering 284–298 (SQEIEDSEANDEDDD) has biased composition (acidic residues).

Belongs to the AccD/PCCB family. In terms of assembly, acetyl-CoA carboxylase is a heterohexamer composed of biotin carboxyl carrier protein, biotin carboxylase and 2 subunits each of ACCase subunit alpha and ACCase plastid-coded subunit beta (accD). It depends on Zn(2+) as a cofactor.

It localises to the plastid. The enzyme catalyses N(6)-carboxybiotinyl-L-lysyl-[protein] + acetyl-CoA = N(6)-biotinyl-L-lysyl-[protein] + malonyl-CoA. Its pathway is lipid metabolism; malonyl-CoA biosynthesis; malonyl-CoA from acetyl-CoA: step 1/1. In terms of biological role, component of the acetyl coenzyme A carboxylase (ACC) complex. Biotin carboxylase (BC) catalyzes the carboxylation of biotin on its carrier protein (BCCP) and then the CO(2) group is transferred by the transcarboxylase to acetyl-CoA to form malonyl-CoA. The protein is Acetyl-coenzyme A carboxylase carboxyl transferase subunit beta of Cuscuta gronovii (Common dodder).